The following is a 339-amino-acid chain: MAQLGAVVAVASSFFCASLFSAVHKIEEGHIGVYYRGGALLTSTSGPGFHLMLPFITSYKSVQTTLQTDEVKNVPCGTSGGVMIYFDRIEVVNFLVPNAVYDIVKNYTADYDKALIFNKIHHELNQFCSVHTLQEVYIELFDQIDENLKLALQQDLTSMAPGLVIQAVRVTKPNIPEAIRRNYELMESEKTKLLIAAQKQKVVEKEAETERKKALIEAEKVAQVAEITYGQKVMEKETEKKISEIEDAAFLAREKAKADAECYTAMKIAEANKLKLTPEYLQLMKYKAIASNSKIYFGKDIPNMFMDSAGSVSKQFEGLADKLSFGLEDEPLETATKEN.

Residues M1–Q3 lie on the Cytoplasmic side of the membrane. The chain crosses the membrane as a helical span at residues L4 to H24. The Lumenal portion of the chain corresponds to K25–N339. N106 carries an N-linked (GlcNAc...) asparagine glycan. Positions E177–A309 are interaction with ERLIN1. K267 is modified (N6-acetyllysine).

It belongs to the band 7/mec-2 family. In terms of assembly, forms a heteromeric complex with ERLIN1. In complex with ERLIN1, interacts with RNF170. Interacts with activated ITPR1, independently of the degree of ITPR1 polyubiquitination. Interacts with SCAP, INSIG1, SREBF1 and SREBF2 under cholesterol sufficiency conditions; indicative for an association with the SCAP-SREBP-INSIG complex. Probably part of an AMFR/gp78 and INSIG1-containing ubiquitin ligase complex involved in ERAD of HMGCR. Interacts with TMUB1; TMUB1 bridges the association with AMFR. Interacts with SYVN1 and RNF139. Interacts with TMEM259. Interacts with TMEM41B. Deubiquitinated by USP25; leading to stabilization. Ubiquitous.

The protein resides in the endoplasmic reticulum membrane. Functionally, component of the ERLIN1/ERLIN2 complex which mediates the endoplasmic reticulum-associated degradation (ERAD) of inositol 1,4,5-trisphosphate receptors (IP3Rs) such as ITPR1. Promotes sterol-accelerated ERAD of HMGCR probably implicating an AMFR/gp78-containing ubiquitin ligase complex. Involved in regulation of cellular cholesterol homeostasis by regulation the SREBP signaling pathway. May promote ER retention of the SCAP-SREBF complex. This is Erlin-2 (ERLIN2) from Homo sapiens (Human).